A 633-amino-acid chain; its full sequence is Hyphal wall protein 1 (633 aa).

An N-terminal signal peptide occupies residues 1–27; sequence MRLSTAQLIAIAYYMLSIGATVPQVDG. Disordered regions lie at residues 40-306 and 411-569; these read SYDY…TTTT and CPLT…SGAI. Over residues 42-114 the composition is skewed to low complexity; that stretch reads DYYQEPCDDY…DYPQQPQEPC (73 aa). A 1; approximate repeat occupies 46-58; sequence EPCDDYPQQQQQQ. The 14 X 10 AA tandem repeats of [EVIQ]-P-[CDT]-D-[YNW]-P-[PQ]-[QI]-[QP]-[QDN] stretch occupies residues 46–187; the sequence is EPCDDYPQQQ…PNIPTDWIPD (142 aa). A 2; approximate repeat occupies 59–69; sequence EPCDYPQQQQQ. One copy of the 3; approximate repeat lies at 70–81; that stretch reads EEPCDYPQQQPQ. 9 consecutive repeat copies span residues 82 to 91, 92 to 101, 102 to 111, 112 to 121, 122 to 131, 132 to 141, 142 to 151, 152 to 161, and 162 to 171. Residues 115–171 show a composition bias toward pro residues; that stretch reads DNPPQPDVPCDNPPQPDVPCDNPPQPDIPCDNPPQPDIPCDNPPQPDQPDDNPPIPN. One copy of the 13; truncated repeat lies at 172 to 179; the sequence is IPTDWIPN. 2 stretches are compositionally biased toward low complexity: residues 172–183 and 193–306; these read IPTDWIPNIPTD and TTPA…TTTT. The stretch at 180–187 is one 14; truncated repeat; sequence IPTDWIPD. N-linked (GlcNAc...) asparagine glycosylation is found at Asn240 and Asn285. Over residues 414–425 the composition is skewed to polar residues; it reads TENTPGTDSTPE. Low complexity predominate over residues 507-549; it reads ETKPAAPKSSAPATEPSPVAPGTESAPAGPGASSSPKSSVLAS. A glycan (N-linked (GlcNAc...) asparagine) is linked at Asn600. A lipid anchor (GPI-anchor amidated glycine) is attached at Gly612. The propeptide at 613 to 633 is removed in mature form; it reads AGNNMRLTFGAAIIGIAAFLI.

Belongs to the HWP1 family. In terms of processing, the GPI-anchor is attached to the protein in the endoplasmic reticulum and serves to target the protein to the cell surface. There, the glucosamine-inositol phospholipid moiety is cleaved off and the GPI-modified mannoprotein is covalently attached via its lipidless GPI glycan remnant to the 1,6-beta-glucan of the outer cell wall layer. Post-translationally, N- and O-glycosylated.

Its subcellular location is the secreted. The protein localises to the cell wall. It localises to the membrane. Its function is as follows. Major hyphal cell wall protein which plays a role of adhesin and is required for mating, normal hyphal development, cell-to-cell adhesive functions necessary for biofilm integrity, attachment to host, and virulence. Promotes interactions with host and bacterial molecules, thus leading to effective colonization within polymicrobial communities. Plays a crucial role in gastrointestinal colonization, in mucosal symptomatic and asymptomatic infections, in vaginitis, as well as in lethal oroesophageal candidiasis, caused by the combined action of fungal virulence factors and host inflammatory responses when protective immunity is absent. This is Hyphal wall protein 1 from Candida albicans (strain WO-1) (Yeast).